Reading from the N-terminus, the 456-residue chain is Bifunctional protein GlmU (456 aa).

Residues 1 to 229 (MTKKALSAVI…VMEVEGANNR (229 aa)) form a pyrophosphorylase region. Residues 11–14 (LAAG), lysine 25, glutamine 76, 81–82 (GT), 103–105 (YGD), glycine 140, glutamate 154, asparagine 169, and asparagine 227 contribute to the UDP-N-acetyl-alpha-D-glucosamine site. Mg(2+) is bound at residue aspartate 105. Residue asparagine 227 participates in Mg(2+) binding. A linker region spans residues 230–250 (LQLAALERYFQNKQASKLLLE). Residues 251 to 456 (GVMIYDPARF…QGWQRPIKKK (206 aa)) form an N-acetyltransferase region. The UDP-N-acetyl-alpha-D-glucosamine site is built by arginine 333 and lysine 351. Histidine 363 acts as the Proton acceptor in catalysis. UDP-N-acetyl-alpha-D-glucosamine is bound by residues tyrosine 366 and asparagine 377. Acetyl-CoA-binding positions include alanine 380, 386 to 387 (NY), serine 405, alanine 423, and arginine 440.

The protein in the N-terminal section; belongs to the N-acetylglucosamine-1-phosphate uridyltransferase family. It in the C-terminal section; belongs to the transferase hexapeptide repeat family. In terms of assembly, homotrimer. Mg(2+) is required as a cofactor.

It localises to the cytoplasm. It carries out the reaction alpha-D-glucosamine 1-phosphate + acetyl-CoA = N-acetyl-alpha-D-glucosamine 1-phosphate + CoA + H(+). It catalyses the reaction N-acetyl-alpha-D-glucosamine 1-phosphate + UTP + H(+) = UDP-N-acetyl-alpha-D-glucosamine + diphosphate. The protein operates within nucleotide-sugar biosynthesis; UDP-N-acetyl-alpha-D-glucosamine biosynthesis; N-acetyl-alpha-D-glucosamine 1-phosphate from alpha-D-glucosamine 6-phosphate (route II): step 2/2. It participates in nucleotide-sugar biosynthesis; UDP-N-acetyl-alpha-D-glucosamine biosynthesis; UDP-N-acetyl-alpha-D-glucosamine from N-acetyl-alpha-D-glucosamine 1-phosphate: step 1/1. Its pathway is bacterial outer membrane biogenesis; LPS lipid A biosynthesis. Its function is as follows. Catalyzes the last two sequential reactions in the de novo biosynthetic pathway for UDP-N-acetylglucosamine (UDP-GlcNAc). The C-terminal domain catalyzes the transfer of acetyl group from acetyl coenzyme A to glucosamine-1-phosphate (GlcN-1-P) to produce N-acetylglucosamine-1-phosphate (GlcNAc-1-P), which is converted into UDP-GlcNAc by the transfer of uridine 5-monophosphate (from uridine 5-triphosphate), a reaction catalyzed by the N-terminal domain. The protein is Bifunctional protein GlmU of Haemophilus influenzae (strain ATCC 51907 / DSM 11121 / KW20 / Rd).